The primary structure comprises 405 residues: Pyruvate decarboxylase 2 (405 aa).

The tract at residues 232 to 314 (DSWFNCQKLK…FLINNGGYTI (83 aa)) is thiamine pyrophosphate binding. Mg(2+)-binding residues include Asp-282, Asn-309, and Gly-311. Glu-315 contributes to the substrate binding site.

It belongs to the TPP enzyme family. As to quaternary structure, homotetramer. A metal cation serves as cofactor. Requires thiamine diphosphate as cofactor.

It catalyses the reaction a 2-oxocarboxylate + H(+) = an aldehyde + CO2. The protein is Pyruvate decarboxylase 2 (PDC2) of Pisum sativum (Garden pea).